Consider the following 204-residue polypeptide: Paraneoplastic antigen-like protein 8C (204 aa).

Residues 135–204 (PPATGPRELP…RRHHASDKKL (70 aa)) are disordered. Positions 182–204 (VGKRGKRKNKKNRRRHHASDKKL) are enriched in basic residues.

Belongs to the PNMA family.

The polypeptide is Paraneoplastic antigen-like protein 8C (Homo sapiens (Human)).